The following is a 377-amino-acid chain: Nitric oxide reductase FlRd-NAD(+) reductase (377 aa).

It belongs to the FAD-dependent oxidoreductase family. FAD is required as a cofactor.

It is found in the cytoplasm. The catalysed reaction is 2 reduced [nitric oxide reductase rubredoxin domain] + NAD(+) + H(+) = 2 oxidized [nitric oxide reductase rubredoxin domain] + NADH. It functions in the pathway nitrogen metabolism; nitric oxide reduction. Functionally, one of at least two accessory proteins for anaerobic nitric oxide (NO) reductase. Reduces the rubredoxin moiety of NO reductase. The polypeptide is Nitric oxide reductase FlRd-NAD(+) reductase (Salmonella paratyphi B (strain ATCC BAA-1250 / SPB7)).